The sequence spans 957 residues: Collagen alpha-1(XXI) chain (957 aa).

Residues 1–22 (MAHYITFLCMVLVLLLQNSVLA) form the signal peptide. In terms of domain architecture, VWFA spans 37–211 (DLVFILDGSY…KIREVMKQKL (175 aa)). Residue Asn62 is glycosylated (N-linked (GlcNAc...) asparagine). In terms of domain architecture, Laminin G-like spans 230 to 412 (GFDILLGLDV…VQKLRIYCDP (183 aa)). Collagen-like domains follow at residues 448–500 (PGKP…GARG), 501–542 (LPGY…GDKG), and 543–594 (SPGF…SPGA). Disordered stretches follow at residues 448–786 (PGKP…KPGR) and 825–938 (GSPG…ICDP). Low complexity-rich tracts occupy residues 451-462 (PGLQGPKGDPGL) and 471-481 (QPGQDGKPGYQ). The span at 507 to 517 (EPGRDGDKGDR) shows a compositional bias: basic and acidic residues. Composition is skewed to low complexity over residues 618–637 (QKGEIGPPGQQGKKGAPGMP) and 705–729 (EKGIQGQKGENGRQGIPGQQGIQGH). 4 consecutive Collagen-like domains span residues 681 to 733 (SPGE…HGAK), 734 to 787 (GERG…PGRE), 825 to 882 (GSPG…GSQG), and 884 to 934 (GYPG…GPPG). Positions 732-742 (AKGERGEKGEP) are enriched in basic and acidic residues. The span at 829–838 (IPGPPGPIGP) shows a compositional bias: pro residues. The span at 839-874 (EGPRGLPGLPGRDGVPGLVGVPGRPGVRGLKGLPGR) shows a compositional bias: low complexity. Over residues 889 to 900 (QGPPGPPGPEGP) the composition is skewed to pro residues.

The protein belongs to the fibril-associated collagens with interrupted helices (FACIT) family. Highly expressed in lymph node, jejunum, pancreas, stomach, trachea, testis, uterus and placenta; moderately expressed in brain, colon, lung, prostate, spinal cord, salivary gland and vascular smooth-muscle cells and very weakly expressed in heart, liver, kidney, bone marrow, spleen, thymus, skeletal muscle, adrenal gland and peripheral leukocytes. Expression in heart was higher in the right ventricle and atrium than in the left ventricle and atrium.

The protein localises to the secreted. It is found in the extracellular space. Its subcellular location is the extracellular matrix. It localises to the cytoplasm. This chain is Collagen alpha-1(XXI) chain (COL21A1), found in Homo sapiens (Human).